We begin with the raw amino-acid sequence, 354 residues long: Guanine nucleotide-binding protein G(i) subunit alpha-3 (354 aa).

A lipid anchor (N-myristoyl glycine) is attached at G2. C3 is lipidated: S-palmitoyl cysteine. Positions 32–354 (KEVKLLLLGA…KNNLKECGLY (323 aa)) constitute a G-alpha domain. A G1 motif region spans residues 35-48 (KLLLLGAGESGKST). Residues G42, E43, S44, G45, K46, S47, T48, D150, S151, L175, R176, T177, R178, V179, K180, T181, V201, G203, N269, K270, D272, L273, C325, A326, and T327 each contribute to the GTP site. S47 serves as a coordination point for Mg(2+). Residues 173 to 181 (DVLRTRVKT) form a G2 motif region. T181 is a binding site for Mg(2+). The tract at residues 196–205 (FKMFDVGGQR) is G3 motif. A G4 motif region spans residues 265–272 (ILFLNKKD). Positions 324–329 (TCATDT) are G5 motif.

This sequence belongs to the G-alpha family. G(i/o/t/z) subfamily. In terms of assembly, heterotrimeric G proteins are composed of 3 units; alpha, beta and gamma. The alpha subunit contains the guanine nucleotide binding site. GTP binding causes dissociation of the heterotrimer, liberating the individual subunits so that they can interact with downstream effector proteins. Forms a complex with CCDC88A/GIV and EGFR which leads to enhanced EGFR signaling and triggering of cell migration; ligand stimulation is required for recruitment of GNAI3 to the complex. Interacts (inactive GDP-bound form) with CCDC88A/GIV (via GBA motif); the interaction leads to activation of GNAI3. Interacts (inactive GDP-bound form) with CCDC88C/DAPLE (via GBA motif); the interaction leads to activation of GNAI3. Interacts (inactive GDP-bound form) with NUCB1 (via GBA motif) and NUCB2 (via GBA motif); the interaction leads to activation of GNAI3. Interacts (inactive GDP-bound form) with PLCD4 (via GBA motif); the interaction leads to activation of GNAI3. Interacts with INSR; the interaction is probably mediated by CCDC88A/GIV. Interacts with GPSM1. Interacts (GDP-bound form) with GPSM2 (via GoLoco domains). Does not interact with RGS2. Interacts with RGS8 and RGS10; this strongly enhances the intrinsic GTPase activity. Interacts with RGS16; this strongly enhances the intrinsic GTPase activity. Interacts with RGS12. Interacts (via active GTP- or inactive GDP-bound form) with RGS14. Interacts (via active GTP-bound form) with TRPC5 (via ANK repeats) in a homotetrameric ion channel; the interaction is direct and activates the channel activity.

Its subcellular location is the cytoplasm. It is found in the cell membrane. The protein localises to the cytoskeleton. The protein resides in the microtubule organizing center. It localises to the centrosome. Its function is as follows. Heterotrimeric guanine nucleotide-binding proteins (G proteins) function as transducers downstream of G protein-coupled receptors (GPCRs) in numerous signaling cascades. The alpha chain contains the guanine nucleotide binding site and alternates between an active, GTP-bound state and an inactive, GDP-bound state. Signaling by an activated GPCR promotes GDP release and GTP binding. The alpha subunit has a low GTPase activity that converts bound GTP to GDP, thereby terminating the signal. Both GDP release and GTP hydrolysis are modulated by numerous regulatory proteins. Signaling is mediated via effector proteins, such as adenylate cyclase. Inhibits adenylate cyclase activity, leading to decreased intracellular cAMP levels. Stimulates the activity of receptor-regulated K(+) channels. The active GTP-bound form prevents the association of RGS14 with centrosomes and is required for the translocation of RGS14 from the cytoplasm to the plasma membrane. May play a role in cell division. The active GTP-bound form activates the calcium permeant TRPC5 ion channels. The chain is Guanine nucleotide-binding protein G(i) subunit alpha-3 (GNAI3) from Cricetulus griseus (Chinese hamster).